We begin with the raw amino-acid sequence, 386 residues long: Lipid-A-disaccharide synthase (386 aa).

The protein belongs to the LpxB family.

It catalyses the reaction a lipid X + a UDP-2-N,3-O-bis[(3R)-3-hydroxyacyl]-alpha-D-glucosamine = a lipid A disaccharide + UDP + H(+). Its pathway is bacterial outer membrane biogenesis; LPS lipid A biosynthesis. Functionally, condensation of UDP-2,3-diacylglucosamine and 2,3-diacylglucosamine-1-phosphate to form lipid A disaccharide, a precursor of lipid A, a phosphorylated glycolipid that anchors the lipopolysaccharide to the outer membrane of the cell. This Chromobacterium violaceum (strain ATCC 12472 / DSM 30191 / JCM 1249 / CCUG 213 / NBRC 12614 / NCIMB 9131 / NCTC 9757 / MK) protein is Lipid-A-disaccharide synthase.